The sequence spans 90 residues: Translation initiation factor IF-1 2 (90 aa).

The region spanning 1 to 72 is the S1-like domain; it reads MAKEELLELD…TKGRINFRHK (72 aa).

It belongs to the IF-1 family. Component of the 30S ribosomal translation pre-initiation complex which assembles on the 30S ribosome in the order IF-2 and IF-3, IF-1 and N-formylmethionyl-tRNA(fMet); mRNA recruitment can occur at any time during PIC assembly.

Its subcellular location is the cytoplasm. Its function is as follows. One of the essential components for the initiation of protein synthesis. Stabilizes the binding of IF-2 and IF-3 on the 30S subunit to which N-formylmethionyl-tRNA(fMet) subsequently binds. Helps modulate mRNA selection, yielding the 30S pre-initiation complex (PIC). Upon addition of the 50S ribosomal subunit IF-1, IF-2 and IF-3 are released leaving the mature 70S translation initiation complex. This chain is Translation initiation factor IF-1 2, found in Paraburkholderia xenovorans (strain LB400).